Consider the following 344-residue polypeptide: 4-hydroxy-3-methylbut-2-en-1-yl diphosphate synthase (flavodoxin) (344 aa).

Residues cysteine 253, cysteine 256, cysteine 288, and glutamate 295 each coordinate [4Fe-4S] cluster.

Belongs to the IspG family. Requires [4Fe-4S] cluster as cofactor.

The enzyme catalyses (2E)-4-hydroxy-3-methylbut-2-enyl diphosphate + oxidized [flavodoxin] + H2O + 2 H(+) = 2-C-methyl-D-erythritol 2,4-cyclic diphosphate + reduced [flavodoxin]. It functions in the pathway isoprenoid biosynthesis; isopentenyl diphosphate biosynthesis via DXP pathway; isopentenyl diphosphate from 1-deoxy-D-xylulose 5-phosphate: step 5/6. Converts 2C-methyl-D-erythritol 2,4-cyclodiphosphate (ME-2,4cPP) into 1-hydroxy-2-methyl-2-(E)-butenyl 4-diphosphate. This Thermotoga petrophila (strain ATCC BAA-488 / DSM 13995 / JCM 10881 / RKU-1) protein is 4-hydroxy-3-methylbut-2-en-1-yl diphosphate synthase (flavodoxin).